A 340-amino-acid chain; its full sequence is 4-hydroxy-3-methylbut-2-enyl diphosphate reductase (340 aa).

Position 21 (cysteine 21) interacts with [4Fe-4S] cluster. Residues histidine 50 and histidine 83 each coordinate (2E)-4-hydroxy-3-methylbut-2-enyl diphosphate. 2 residues coordinate dimethylallyl diphosphate: histidine 50 and histidine 83. Residues histidine 50 and histidine 83 each coordinate isopentenyl diphosphate. Residue cysteine 105 participates in [4Fe-4S] cluster binding. Position 133 (histidine 133) interacts with (2E)-4-hydroxy-3-methylbut-2-enyl diphosphate. Position 133 (histidine 133) interacts with dimethylallyl diphosphate. Histidine 133 is an isopentenyl diphosphate binding site. Residue glutamate 135 is the Proton donor of the active site. Threonine 173 contributes to the (2E)-4-hydroxy-3-methylbut-2-enyl diphosphate binding site. Residue cysteine 203 coordinates [4Fe-4S] cluster. The (2E)-4-hydroxy-3-methylbut-2-enyl diphosphate site is built by serine 231, serine 232, asparagine 233, and serine 276. Dimethylallyl diphosphate contacts are provided by serine 231, serine 232, asparagine 233, and serine 276. Positions 231, 232, 233, and 276 each coordinate isopentenyl diphosphate. The interval 320–340 is disordered; sequence KARGEPLTRSATAGDRMNADR.

Belongs to the IspH family. [4Fe-4S] cluster is required as a cofactor.

It carries out the reaction isopentenyl diphosphate + 2 oxidized [2Fe-2S]-[ferredoxin] + H2O = (2E)-4-hydroxy-3-methylbut-2-enyl diphosphate + 2 reduced [2Fe-2S]-[ferredoxin] + 2 H(+). It catalyses the reaction dimethylallyl diphosphate + 2 oxidized [2Fe-2S]-[ferredoxin] + H2O = (2E)-4-hydroxy-3-methylbut-2-enyl diphosphate + 2 reduced [2Fe-2S]-[ferredoxin] + 2 H(+). Its pathway is isoprenoid biosynthesis; dimethylallyl diphosphate biosynthesis; dimethylallyl diphosphate from (2E)-4-hydroxy-3-methylbutenyl diphosphate: step 1/1. It functions in the pathway isoprenoid biosynthesis; isopentenyl diphosphate biosynthesis via DXP pathway; isopentenyl diphosphate from 1-deoxy-D-xylulose 5-phosphate: step 6/6. Functionally, catalyzes the conversion of 1-hydroxy-2-methyl-2-(E)-butenyl 4-diphosphate (HMBPP) into a mixture of isopentenyl diphosphate (IPP) and dimethylallyl diphosphate (DMAPP). Acts in the terminal step of the DOXP/MEP pathway for isoprenoid precursor biosynthesis. In Acidothermus cellulolyticus (strain ATCC 43068 / DSM 8971 / 11B), this protein is 4-hydroxy-3-methylbut-2-enyl diphosphate reductase.